Reading from the N-terminus, the 618-residue chain is Elongation factor 4 (618 aa).

The region spanning 17-198 is the tr-type G domain; that stretch reads AIIRNFCIIA…KIVRDLPAPE (182 aa). GTP contacts are provided by residues 29–34 and 145–148; these read DHGKST and NKID.

Belongs to the TRAFAC class translation factor GTPase superfamily. Classic translation factor GTPase family. LepA subfamily.

It is found in the cell membrane. It carries out the reaction GTP + H2O = GDP + phosphate + H(+). Functionally, required for accurate and efficient protein synthesis under certain stress conditions. May act as a fidelity factor of the translation reaction, by catalyzing a one-codon backward translocation of tRNAs on improperly translocated ribosomes. Back-translocation proceeds from a post-translocation (POST) complex to a pre-translocation (PRE) complex, thus giving elongation factor G a second chance to translocate the tRNAs correctly. Binds to ribosomes in a GTP-dependent manner. In Pseudarthrobacter chlorophenolicus (strain ATCC 700700 / DSM 12829 / CIP 107037 / JCM 12360 / KCTC 9906 / NCIMB 13794 / A6) (Arthrobacter chlorophenolicus), this protein is Elongation factor 4.